The following is a 507-amino-acid chain: Xylose import ATP-binding protein XylG (507 aa).

ABC transporter domains are found at residues 5-242 (LKMT…VGRE) and 259-504 (LEVK…LSEK). Position 37–44 (37–44 (GENGSGKS)) interacts with ATP.

The protein belongs to the ABC transporter superfamily. Xylose importer (TC 3.A.1.2.4) family. As to quaternary structure, the complex is composed of two ATP-binding proteins (XylG), two transmembrane proteins (XylH) and a solute-binding protein (XylF).

The protein resides in the cell inner membrane. The enzyme catalyses D-xylose(out) + ATP + H2O = D-xylose(in) + ADP + phosphate + H(+). Part of the ABC transporter complex XylFGH involved in xylose import. Responsible for energy coupling to the transport system. In Photobacterium profundum (strain SS9), this protein is Xylose import ATP-binding protein XylG.